The following is a 468-amino-acid chain: Cysteine--tRNA ligase (468 aa).

Zn(2+) is bound at residue C27. Residues 29–39 (PTVYNYFHIGN) carry the 'HIGH' region motif. C207, H232, and E236 together coordinate Zn(2+). The 'KMSKS' region signature appears at 264-268 (KMAKS). An ATP-binding site is contributed by K267.

It belongs to the class-I aminoacyl-tRNA synthetase family. Monomer. Zn(2+) is required as a cofactor.

It localises to the cytoplasm. It catalyses the reaction tRNA(Cys) + L-cysteine + ATP = L-cysteinyl-tRNA(Cys) + AMP + diphosphate. The sequence is that of Cysteine--tRNA ligase from Acetivibrio thermocellus (strain ATCC 27405 / DSM 1237 / JCM 9322 / NBRC 103400 / NCIMB 10682 / NRRL B-4536 / VPI 7372) (Clostridium thermocellum).